The sequence spans 448 residues: Exodeoxyribonuclease 7 large subunit (448 aa).

Belongs to the XseA family. In terms of assembly, heterooligomer composed of large and small subunits.

The protein resides in the cytoplasm. It catalyses the reaction Exonucleolytic cleavage in either 5'- to 3'- or 3'- to 5'-direction to yield nucleoside 5'-phosphates.. In terms of biological role, bidirectionally degrades single-stranded DNA into large acid-insoluble oligonucleotides, which are then degraded further into small acid-soluble oligonucleotides. The polypeptide is Exodeoxyribonuclease 7 large subunit (Shewanella baltica (strain OS195)).